The sequence spans 553 residues: Dihydrolipoyllysine-residue acetyltransferase component of pyruvate dehydrogenase complex (553 aa).

Positions Ala4–Glu78 constitute a Lipoyl-binding 1 domain. The residue at position 44 (Lys44) is an N6-lipoyllysine. Residues Ala97–Gly118 are disordered. The Lipoyl-binding 2 domain occupies Thr122 to Glu196. N6-lipoyllysine is present on Lys162. Residues His250 to Val287 form the Peripheral subunit-binding (PSBD) domain. His526 is an active-site residue.

Belongs to the 2-oxoacid dehydrogenase family. Forms a 24-polypeptide structural core with octahedral symmetry. (R)-lipoate is required as a cofactor.

It catalyses the reaction N(6)-[(R)-dihydrolipoyl]-L-lysyl-[protein] + acetyl-CoA = N(6)-[(R)-S(8)-acetyldihydrolipoyl]-L-lysyl-[protein] + CoA. Its function is as follows. The pyruvate dehydrogenase complex catalyzes the overall conversion of pyruvate to acetyl-CoA and CO(2). It contains multiple copies of three enzymatic components: pyruvate dehydrogenase (E1), dihydrolipoamide acetyltransferase (E2) and lipoamide dehydrogenase (E3). The protein is Dihydrolipoyllysine-residue acetyltransferase component of pyruvate dehydrogenase complex (pdhB) of Cupriavidus necator (strain ATCC 17699 / DSM 428 / KCTC 22496 / NCIMB 10442 / H16 / Stanier 337) (Ralstonia eutropha).